Here is a 120-residue protein sequence, read N- to C-terminus: Ribosome-binding factor A (120 aa).

This sequence belongs to the RbfA family. In terms of assembly, monomer. Binds 30S ribosomal subunits, but not 50S ribosomal subunits or 70S ribosomes.

It is found in the cytoplasm. One of several proteins that assist in the late maturation steps of the functional core of the 30S ribosomal subunit. Associates with free 30S ribosomal subunits (but not with 30S subunits that are part of 70S ribosomes or polysomes). Required for efficient processing of 16S rRNA. May interact with the 5'-terminal helix region of 16S rRNA. This Chlamydia felis (strain Fe/C-56) (Chlamydophila felis) protein is Ribosome-binding factor A.